The sequence spans 475 residues: E3 ubiquitin-protein ligase TRIM21 (475 aa).

The RING-type zinc finger occupies C16 to R55. Zn(2+) is bound by residues C92, H95, C114, and H120. Residues C92–H123 form a B box-type zinc finger. The stretch at L128–S238 forms a coiled coil. Position 266 is a phosphoserine (S266). A B30.2/SPRY domain is found at E268–L465.

It belongs to the TRIM/RBCC family. Homotrimer. Interacts (via C-terminus) with IRF8 (via C-terminus). Component of a SCF(SKP2)-like complex containing CUL1, SKP1, TRIM21 and SKP2. Interacts with CALR, CUL1, FBXW11, HSPA5, IKBKB, IRF3, SKP1 and VCP. Interacts with SKP2; the interaction with SKP2 does not depend on an intact F-box domain. Interacts (via N-terminus and C-terminus) with DCP2 (via N-terminus and C-terminus). Interacts with ULK1, BECN1 and with ATG8 family members, including GABARAP, GABARAPL1, GABARAPL2 and MAP1LC3C/LC3C. Interacts with TRIM21 and SQSTM1/sequestosome 1. Interacts with IRF3. Interacts (via the SPRY domain) with NMI (via coiled-coil domain); the interaction promotes 'Lys-63'-linked ubiquitination of NMI. Interacts with IFI35 and NMI; the interaction facilitates NMI-IFI35 complex formation. In terms of assembly, (Microbial infection) Interacts (via B30.2/SPRY domain) with severe fever with thrombocytopenia syndrome virus (SFTSV) NSs; this interaction activates NFE2L2-mediated transcriptional activation of antioxidant genes. Post-translationally, autoubiquitinated; does not lead to its proteasomal degradation. Deubiquitinated by USP4; leading to its stabilization. As to expression, isoform 1 and isoform 2 are expressed in fetal and adult heart and fetal lung.

The protein localises to the cytoplasm. Its subcellular location is the cytoplasmic vesicle. The protein resides in the autophagosome. It is found in the nucleus. It localises to the P-body. The protein localises to the stress granule. The catalysed reaction is S-ubiquitinyl-[E2 ubiquitin-conjugating enzyme]-L-cysteine + [acceptor protein]-L-lysine = [E2 ubiquitin-conjugating enzyme]-L-cysteine + N(6)-ubiquitinyl-[acceptor protein]-L-lysine.. It functions in the pathway protein modification; protein ubiquitination. E3 ubiquitin-protein ligase whose activity is dependent on E2 enzymes, UBE2D1, UBE2D2, UBE2E1 and UBE2E2. Forms a ubiquitin ligase complex in cooperation with the E2 UBE2D2 that is used not only for the ubiquitination of USP4 and IKBKB but also for its self-ubiquitination. Component of cullin-RING-based SCF (SKP1-CUL1-F-box protein) E3 ubiquitin-protein ligase complexes such as SCF(SKP2)-like complexes. A TRIM21-containing SCF(SKP2)-like complex is shown to mediate ubiquitination of CDKN1B ('Thr-187' phosphorylated-form), thereby promoting its degradation by the proteasome. Monoubiquitinates IKBKB that will negatively regulates Tax-induced NF-kappa-B signaling. Negatively regulates IFN-beta production post-pathogen recognition by catalyzing polyubiquitin-mediated degradation of IRF3. Mediates the ubiquitin-mediated proteasomal degradation of IgG1 heavy chain, which is linked to the VCP-mediated ER-associated degradation (ERAD) pathway. Promotes IRF8 ubiquitination, which enhanced the ability of IRF8 to stimulate cytokine genes transcription in macrophages. Plays a role in the regulation of the cell cycle progression. Enhances the decapping activity of DCP2. Exists as a ribonucleoprotein particle present in all mammalian cells studied and composed of a single polypeptide and one of four small RNA molecules. At least two isoforms are present in nucleated and red blood cells, and tissue specific differences in RO/SSA proteins have been identified. The common feature of these proteins is their ability to bind HY RNAs.2. Involved in the regulation of innate immunity and the inflammatory response in response to IFNG/IFN-gamma. Organizes autophagic machinery by serving as a platform for the assembly of ULK1, Beclin 1/BECN1 and ATG8 family members and recognizes specific autophagy targets, thus coordinating target recognition with assembly of the autophagic apparatus and initiation of autophagy. Also regulates autophagy through FIP200/RB1CC1 ubiquitination and subsequent decreased protein stability. Represses the innate antiviral response by facilitating the formation of the NMI-IFI35 complex through 'Lys-63'-linked ubiquitination of NMI. During viral infection, promotes cell pyroptosis by mediating 'Lys-6'-linked ubiquitination of ISG12a/IFI27, facilitating its translocation into the mitochondria and subsequent CASP3 activation. When up-regulated through the IFN/JAK/STAT signaling pathway, promotes 'Lys-27'-linked ubiquitination of MAVS, leading to the recruitment of TBK1 and up-regulation of innate immunity. Mediates 'Lys-63'-linked polyubiquitination of G3BP1 in response to heat shock, leading to stress granule disassembly. The protein is E3 ubiquitin-protein ligase TRIM21 of Homo sapiens (Human).